A 718-amino-acid chain; its full sequence is Calpastatin (718 aa).

2 disordered regions span residues 1 to 189 (MNPA…MSST) and 210 to 238 (EKKT…LSSD). Basic residues predominate over residues 20–29 (PHSKKRHRRQ). Composition is skewed to basic and acidic residues over residues 30–61 (DAKT…EHTK) and 68–104 (HASD…KPQD). Lys-32 is covalently cross-linked (Glycyl lysine isopeptide (Lys-Gly) (interchain with G-Cter in SUMO2)). An N6-acetyllysine modification is found at Lys-49. At Ser-86 the chain carries Phosphoserine. A compositionally biased stretch (low complexity) spans 114 to 124 (AAGTTAAPGKA). A phosphoserine mark is found at Ser-133, Ser-222, and Ser-243. An Inhibitory domain 1 repeat occupies 170–222 (TQEDSTAYTGPEISDPMSSTYIEELGKREVTIPPKYRELLEKKTGVAGPPPDS). Disordered regions lie at residues 266-291 (ESAK…AMSD) and 320-509 (EAKR…QLPA). Residue Ser-290 is modified to Blocked amino end (Ser); in form erythrocyte. An Inhibitory domain 2 repeat occupies 307–359 (EPELDLSSIKEVAEAKRKEEKVEKCGEDDETVPAEYRLKPATDKDGKPLLPEP). Basic and acidic residues-rich tracts occupy residues 320–331 (EAKRKEEKVEKC), 342–377 (YRLK…ELSK), and 384–399 (SNEK…EESK). Phosphoserine occurs at positions 367, 369, and 376. Over residues 400–411 (AAVPAPVAEAVP) the composition is skewed to low complexity. Ser-444 is subject to Phosphoserine. Basic and acidic residues predominate over residues 446-496 (GRKEADPEEGKPVADKIKEKSKEEEREKLGEKEETIPPDYRLEEAKDKDGK). One copy of the Inhibitory domain 3 repeat lies at 450-503 (ADPEEGKPVADKIKEKSKEEEREKLGEKEETIPPDYRLEEAKDKDGKPLLPSEP). Residues Ser-520, Ser-531, Ser-579, and Ser-581 each carry the phosphoserine modification. The interval 543–718 (VSEVVSQSPA…KPKANEKNAS (176 aa)) is disordered. Basic and acidic residues predominate over residues 566-579 (PSNKELDDALDKLS). One copy of the Inhibitory domain 4 repeat lies at 587 to 640 (PDPDENKPMEDKVKERAKKEHKDKLGERDDTIPPEYRHLLDQGEQDKPEKPPTK). Basic and acidic residues-rich tracts occupy residues 587–650 (PDPD…KPAG) and 706–718 (ETSK…KNAS).

The protein belongs to the protease inhibitor I27 (calpastatin) family.

In terms of biological role, specific inhibition of calpain (calcium-dependent cysteine protease). Plays a key role in postmortem tenderization of meat and have been proposed to be involved in muscle protein degradation in living tissue. The protein is Calpastatin (CAST) of Oryctolagus cuniculus (Rabbit).